A 266-amino-acid chain; its full sequence is Hydroxyethylthiazole kinase (266 aa).

Substrate is bound at residue Met-43. ATP is bound by residues Arg-119 and Thr-166. Substrate is bound at residue Gly-193.

Belongs to the Thz kinase family. The cofactor is Mg(2+).

It carries out the reaction 5-(2-hydroxyethyl)-4-methylthiazole + ATP = 4-methyl-5-(2-phosphooxyethyl)-thiazole + ADP + H(+). It functions in the pathway cofactor biosynthesis; thiamine diphosphate biosynthesis; 4-methyl-5-(2-phosphoethyl)-thiazole from 5-(2-hydroxyethyl)-4-methylthiazole: step 1/1. Catalyzes the phosphorylation of the hydroxyl group of 4-methyl-5-beta-hydroxyethylthiazole (THZ). The chain is Hydroxyethylthiazole kinase from Methanococcus maripaludis (strain DSM 14266 / JCM 13030 / NBRC 101832 / S2 / LL).